The chain runs to 276 residues: NADPH-dependent 7-cyano-7-deazaguanine reductase (276 aa).

Isoleucine 83–serine 85 serves as a coordination point for substrate. Serine 85–lysine 86 lines the NADPH pocket. Catalysis depends on cysteine 184, which acts as the Thioimide intermediate. Residue aspartate 191 is the Proton donor of the active site. Histidine 223 to glutamate 224 contributes to the substrate binding site. Residue arginine 252–glycine 253 coordinates NADPH.

It belongs to the GTP cyclohydrolase I family. QueF type 2 subfamily. In terms of assembly, homodimer.

The protein localises to the cytoplasm. It carries out the reaction 7-aminomethyl-7-carbaguanine + 2 NADP(+) = 7-cyano-7-deazaguanine + 2 NADPH + 3 H(+). It functions in the pathway tRNA modification; tRNA-queuosine biosynthesis. Its function is as follows. Catalyzes the NADPH-dependent reduction of 7-cyano-7-deazaguanine (preQ0) to 7-aminomethyl-7-deazaguanine (preQ1). The protein is NADPH-dependent 7-cyano-7-deazaguanine reductase of Pseudomonas fluorescens (strain ATCC BAA-477 / NRRL B-23932 / Pf-5).